Consider the following 58-residue polypeptide: Glutathione reductase (58 aa).

The FAD site is built by glutamate 5, threonine 12, cysteine 13, and lysine 21. A disulfide bridge links cysteine 13 with cysteine 18.

Belongs to the class-I pyridine nucleotide-disulfide oxidoreductase family. In terms of assembly, homodimer. The cofactor is FAD.

It is found in the cytoplasm. It carries out the reaction 2 glutathione + NADP(+) = glutathione disulfide + NADPH + H(+). Functionally, catalyzes the reduction of glutathione disulfide (GSSG) to reduced glutathione (GSH). Constitutes the major mechanism to maintain a high GSH:GSSG ratio in the cytosol. The protein is Glutathione reductase of Spirulina sp.